Consider the following 1109-residue polypeptide: Protein argonaute 3 (1109 aa).

The span at 1–13 shows a compositional bias: basic and acidic residues; that stretch reads MAGRGGRDPRRGY. Disordered stretches follow at residues 1-83 and 125-220; these read MAGR…GLVR and DHRD…PLSK. 3 stretches are compositionally biased toward gly residues: residues 14 to 30, 37 to 54, and 62 to 83; these read DGGY…GGTN, RGGG…GGRG, and DVLG…GLVR. Residues 125-134 show a composition bias toward basic and acidic residues; sequence DHRDQHDHQS. Basic residues predominate over residues 135 to 161; that stretch reads QRHHHRHHHHQRQRHHHHHQRQQRRGS. In terms of domain architecture, PAZ spans 411–521; sequence SVLDLVKTMK…VPIEFCNIPE (111 aa). The segment covering 527–545 has biased composition (basic and acidic residues); sequence VARLDDKKSDNKGEQEKPS. The disordered stretch occupies residues 527–548; the sequence is VARLDDKKSDNKGEQEKPSTKT. Residues 720-1023 enclose the Piwi domain; the sequence is LLFCPMLNRC…AAYRGRLYYE (304 aa).

The protein belongs to the argonaute family. Ago subfamily.

Functionally, probably involved in the RNA silencing pathway. May bind to short RNAs such as microRNAs (miRNAs) or short interfering RNAs (siRNAs), and represses the translation of mRNAs which are complementary to them. This is Protein argonaute 3 (AGO3) from Oryza sativa subsp. japonica (Rice).